Reading from the N-terminus, the 645-residue chain is 1,4-alpha-glucan branching enzyme GlgB (645 aa).

The active-site Nucleophile is the Asp309. Catalysis depends on Glu352, which acts as the Proton donor. A disordered region spans residues 619–645 (VKTRKGSKKQDGSKTKVRSNVTSRGKR). The span at 636 to 645 (RSNVTSRGKR) shows a compositional bias: polar residues.

Belongs to the glycosyl hydrolase 13 family. GlgB subfamily. Monomer.

The enzyme catalyses Transfers a segment of a (1-&gt;4)-alpha-D-glucan chain to a primary hydroxy group in a similar glucan chain.. It participates in glycan biosynthesis; glycogen biosynthesis. Catalyzes the formation of the alpha-1,6-glucosidic linkages in glycogen by scission of a 1,4-alpha-linked oligosaccharide from growing alpha-1,4-glucan chains and the subsequent attachment of the oligosaccharide to the alpha-1,6 position. In Bacillus mycoides (strain KBAB4) (Bacillus weihenstephanensis), this protein is 1,4-alpha-glucan branching enzyme GlgB.